An 87-amino-acid polypeptide reads, in one-letter code: Cell division topological specificity factor (87 aa).

The protein belongs to the MinE family.

In terms of biological role, prevents the cell division inhibition by proteins MinC and MinD at internal division sites while permitting inhibition at polar sites. This ensures cell division at the proper site by restricting the formation of a division septum at the midpoint of the long axis of the cell. The polypeptide is Cell division topological specificity factor (Neisseria meningitidis serogroup C (strain 053442)).